A 73-amino-acid polypeptide reads, in one-letter code: Conotoxin ArMKLT2-022 (73 aa).

A signal peptide spans 1–22 (MKLTCVLIIAVLFLTACQLTTG). Positions 23 to 40 (EQKDHAQRSADRNSKLTR) are excised as a propeptide. Residue Q41 is modified to Pyrrolidone carboxylic acid. 3 disulfide bridges follow: C42–C56, C49–C60, and C55–C67.

It belongs to the conotoxin O1 superfamily. In terms of tissue distribution, expressed by the venom duct.

The protein resides in the secreted. The polypeptide is Conotoxin ArMKLT2-022 (Conus arenatus (Sand-dusted cone)).